The chain runs to 162 residues: Phosphopantetheine adenylyltransferase (162 aa).

Residue S9 coordinates substrate. ATP is bound by residues 9-10 and H17; that span reads SF. Substrate is bound by residues K41, T73, and R87. ATP is bound by residues 88-90, E98, and 123-129; these read GLR and YSFISSS.

The protein belongs to the bacterial CoaD family. Homohexamer. It depends on Mg(2+) as a cofactor.

Its subcellular location is the cytoplasm. It catalyses the reaction (R)-4'-phosphopantetheine + ATP + H(+) = 3'-dephospho-CoA + diphosphate. The protein operates within cofactor biosynthesis; coenzyme A biosynthesis; CoA from (R)-pantothenate: step 4/5. Reversibly transfers an adenylyl group from ATP to 4'-phosphopantetheine, yielding dephospho-CoA (dPCoA) and pyrophosphate. This is Phosphopantetheine adenylyltransferase from Carboxydothermus hydrogenoformans (strain ATCC BAA-161 / DSM 6008 / Z-2901).